The chain runs to 128 residues: UPF0102 protein MAV_3752 (128 aa).

The protein belongs to the UPF0102 family.

This chain is UPF0102 protein MAV_3752, found in Mycobacterium avium (strain 104).